The primary structure comprises 458 residues: Cell death abnormality protein 8 (458 aa).

At 1 to 45 (MFLKKHKSKLLLVPRDEEQEDAGIVAVLTDRIPSVLLVRWFDLFC) the chain is on the cytoplasmic side. The helical transmembrane segment at 46–66 (FGFAMCSYALDFFSDIGIAIF) threads the bilayer. The Extracellular portion of the chain corresponds to 67–77 (HFWAGRYLSGS). The chain crosses the membrane as a helical span at residues 78–98 (LVLAFALLPSVIINIISMVWM). Topologically, residues 99–123 (LDDEMHWKRRAHPRRTGTFELNQKR) are cytoplasmic. Residues 124–144 (FIPLSKMIVLCICQMGPLFWY) form a helical membrane-spanning segment. Topologically, residues 145–219 (YKALYYGWMF…YYQTGTYPYW (75 aa)) are extracellular. The helical transmembrane segment at 220–240 (LYFQAASLLLSIISISWSVVV) threads the bilayer. Residues 241 to 274 (QNRSLRMIRDDKVNIWPHEAVLQFCWRFLTILAR) are Cytoplasmic-facing. The next 2 membrane-spanning stretches (helical) occupy residues 275 to 295 (IITL…LISV) and 296 to 316 (HLLV…DACT). A topological domain (extracellular) is located at residue His317. Residues 318 to 338 (IEKLLLLINTFIHIFIPFNMV) form a helical membrane-spanning segment. The Cytoplasmic portion of the chain corresponds to 339–353 (EGNTRWRYLTAYSVE). Residues 354 to 374 (FIEMMLVCWLLPLSLNTFPYI) form a helical membrane-spanning segment. Residues 375–378 (EKVQ) lie on the Extracellular side of the membrane. Residues 379–399 (VGVPISFIAGIAIMMMYYQFF) traverse the membrane as a helical segment. At 400 to 458 (HPNRRQLIVTQSQEDLSLNVQKSVETLTPKLESSLEISGEQNTSQDLVSELLLDVEHEN) the chain is on the cytoplasmic side.

This sequence belongs to the XK family. Cleavage by ced-3 activates ced-8 function in promoting phosphatidylserine exposure at the surface of apoptotic cells.

The protein resides in the cell membrane. The catalysed reaction is a 1,2-diacyl-sn-glycero-3-phospho-L-serine(in) = a 1,2-diacyl-sn-glycero-3-phospho-L-serine(out). Functionally, phospholipid scramblase that acts downstream of ced-9 and caspase ced-3 to promote phosphatidylserine exposure on apoptotic cell surface. Phosphatidylserine is a specific marker only present at the surface of apoptotic cells and acts as a specific signal for engulfment. Regulates apoptosis kinetics during embryonic development. Not required for engulfment of germ cell corpses. The protein is Cell death abnormality protein 8 of Caenorhabditis elegans.